A 227-amino-acid chain; its full sequence is MAQNDTVKLIGSWSSPYSLRARVALHLKSVKYEYLDEPDVLKEKSELLLKSNPIHKKVPVLLHGDLSISESLNVVQYVDEAWPSVPSILPSDAYDRASARFWAQYIDDKCFAAVDAVVGAKDDEGKMAAVGKLMECLAILEETFQKSSKGLGFFGGETIGYLDIACSALLGPISVIEAFSGVKFLRQETTPGLIKWAERFRAHEAVKPYMPTVEEVVAFAKQKFNVQ.

Residues 5–86 (DTVKLIGSWS…YVDEAWPSVP (82 aa)) form the GST N-terminal domain. Residues 15-16 (SP), 43-44 (EK), 57-58 (KV), and 70-71 (ES) each bind glutathione. One can recognise a GST C-terminal domain in the interval 92-224 (DAYDRASARF…EVVAFAKQKF (133 aa)). Residue Thr158 is modified to Phosphothreonine.

Belongs to the GST superfamily. Tau family.

The protein localises to the cytoplasm. It is found in the cytosol. It catalyses the reaction RX + glutathione = an S-substituted glutathione + a halide anion + H(+). In vitro, possesses glutathione S-transferase activity toward 1-chloro-2,4-dinitrobenzene (CDNB) and benzyl isothiocyanate (BITC). May be involved in the conjugation of reduced glutathione to a wide number of exogenous and endogenous hydrophobic electrophiles and have a detoxification role against certain herbicides. This is Glutathione S-transferase U13 (GSTU13) from Arabidopsis thaliana (Mouse-ear cress).